Consider the following 303-residue polypeptide: Dihydroorotate dehydrogenase B (NAD(+)), catalytic subunit (303 aa).

Substrate is bound by residues Lys46, 70–74, and Asn124; that span reads NAIGL. 46–47 contributes to the FMN binding site; the sequence is KS. Asn124 is an FMN binding site. Cys127 functions as the Nucleophile in the catalytic mechanism. The FMN site is built by Lys163 and Ile189. A substrate-binding site is contributed by 190 to 191; the sequence is NS. FMN-binding positions include Gly216, 242 to 243, and 264 to 265; these read GG and GT.

It belongs to the dihydroorotate dehydrogenase family. Type 1 subfamily. As to quaternary structure, heterotetramer of 2 PyrK and 2 PyrD type B subunits. FMN serves as cofactor.

It is found in the cytoplasm. The catalysed reaction is (S)-dihydroorotate + NAD(+) = orotate + NADH + H(+). It participates in pyrimidine metabolism; UMP biosynthesis via de novo pathway; orotate from (S)-dihydroorotate (NAD(+) route): step 1/1. Its function is as follows. Catalyzes the conversion of dihydroorotate to orotate with NAD(+) as electron acceptor. The chain is Dihydroorotate dehydrogenase B (NAD(+)), catalytic subunit (pyrD) from Methanothermobacter thermautotrophicus (strain ATCC 29096 / DSM 1053 / JCM 10044 / NBRC 100330 / Delta H) (Methanobacterium thermoautotrophicum).